We begin with the raw amino-acid sequence, 188 residues long: MSHSSSGAPLDPVAFIHSQIRTVPDWPQPGVMFRDITTLLQSPKALRILVDLFVERYVDAKLDYVAGLDARGFIIAPIVAYELSVGFVPIRKVGKLPYKTRSESYELEYGSATVEIHEDACKPGDRVIIMDDLIATGGTMMAGRNLLERLGAVVVEGAAIIDLPDLGGSALLRNAGLPVYTVTEFAGH.

This sequence belongs to the purine/pyrimidine phosphoribosyltransferase family. Homodimer.

Its subcellular location is the cytoplasm. It carries out the reaction AMP + diphosphate = 5-phospho-alpha-D-ribose 1-diphosphate + adenine. The protein operates within purine metabolism; AMP biosynthesis via salvage pathway; AMP from adenine: step 1/1. In terms of biological role, catalyzes a salvage reaction resulting in the formation of AMP, that is energically less costly than de novo synthesis. The protein is Adenine phosphoribosyltransferase of Burkholderia multivorans (strain ATCC 17616 / 249).